The sequence spans 209 residues: Large ribosomal subunit protein uL4 (209 aa).

Residues 46–72 (GTSSTKTRSEVRGSSKKPWKQKGTGRA) are disordered. Residues 59-72 (SSKKPWKQKGTGRA) show a composition bias toward basic residues.

It belongs to the universal ribosomal protein uL4 family. In terms of assembly, part of the 50S ribosomal subunit.

Its function is as follows. One of the primary rRNA binding proteins, this protein initially binds near the 5'-end of the 23S rRNA. It is important during the early stages of 50S assembly. It makes multiple contacts with different domains of the 23S rRNA in the assembled 50S subunit and ribosome. In terms of biological role, forms part of the polypeptide exit tunnel. This is Large ribosomal subunit protein uL4 from Borreliella burgdorferi (strain ATCC 35210 / DSM 4680 / CIP 102532 / B31) (Borrelia burgdorferi).